The following is a 1127-amino-acid chain: Disease resistance protein RPS6 (1127 aa).

Met-1 is modified (N-acetylmethionine). In terms of domain architecture, TIR spans 12–176 (WSYHVFPSFS…EIANDILGKM (165 aa)). The active site involves Glu-87. An NB-ARC domain is found at 191 to 452 (EDHITKMSSL…HIACIFNGEK (262 aa)). LRR repeat units lie at residues 197–221 (MSSL…GIGK), 540–563 (IDET…LFLK), 587–609 (PSRL…NFHP), 610–632 (ENLV…VHSL), 633–656 (AGLR…SMAT), 658–679 (LETL…IQYL), 680–704 (NKLN…NLKS), 766–790 (SPTL…IQNL), 791–813 (YQLE…GINL), 814–834 (DSLI…PDIS), and 835–857 (TNIS…IEKL).

Interacts with EDS1. Ubiquitous.

It catalyses the reaction NAD(+) + H2O = ADP-D-ribose + nicotinamide + H(+). Functionally, disease resistance (R) protein that specifically recognizes the hopA1 type III effector avirulence protein from Pseudomonas syringae. Resistance proteins guard the plant against pathogens that contain an appropriate avirulence protein via an indirect interaction with this avirulence protein. That triggers a defense system including the hypersensitive response, which restricts the pathogen growth. The protein is Disease resistance protein RPS6 (RPS6) of Arabidopsis thaliana (Mouse-ear cress).